Consider the following 220-residue polypeptide: NADH-quinone oxidoreductase subunit I (220 aa).

4Fe-4S ferredoxin-type domains are found at residues 71-102 and 112-141; these read LQRLLDSGSERCIGCGLCEKICTSNCIRIITH and DSYTINLGRCIYCGLCAEVCPELAIVMGNR. [4Fe-4S] cluster-binding residues include cysteine 82, cysteine 85, cysteine 88, cysteine 92, cysteine 121, cysteine 124, cysteine 127, and cysteine 131. The interval 187–220 is disordered; it reads MQATPLDYVQEPSKEESKEETPTNPESNKGDENV. Basic and acidic residues predominate over residues 198-207; the sequence is PSKEESKEET.

It belongs to the complex I 23 kDa subunit family. In terms of assembly, NDH-1 is composed of 14 different subunits. Subunits NuoA, H, J, K, L, M, N constitute the membrane sector of the complex. It depends on [4Fe-4S] cluster as a cofactor.

The protein resides in the cell inner membrane. It carries out the reaction a quinone + NADH + 5 H(+)(in) = a quinol + NAD(+) + 4 H(+)(out). Functionally, NDH-1 shuttles electrons from NADH, via FMN and iron-sulfur (Fe-S) centers, to quinones in the respiratory chain. The immediate electron acceptor for the enzyme in this species is believed to be ubiquinone. Couples the redox reaction to proton translocation (for every two electrons transferred, four hydrogen ions are translocated across the cytoplasmic membrane), and thus conserves the redox energy in a proton gradient. The protein is NADH-quinone oxidoreductase subunit I of Helicobacter pylori (strain Shi470).